Consider the following 775-residue polypeptide: Kinesin-like protein KIF3B (775 aa).

A Kinesin motor domain is found at 9 to 341; sequence SVKVVVRCRP…LRYANRAKNI (333 aa). 97 to 104 lines the ATP pocket; it reads GQTGTGKT. Residues 372–419 are disordered; the sequence is KRSGRKRRRRRRRRVGEGGEEFEDGEDEEDDDDDDEDEEEGVDADKNI. Residues 374 to 385 are compositionally biased toward basic residues; sequence SGRKRRRRRRRR. Residues 389–413 show a composition bias toward acidic residues; the sequence is GGEEFEDGEDEEDDDDDDEDEEEGV. Positions 501–591 form a coiled coil; sequence LELKRQEIAE…QNELTRELKL (91 aa). Residues 716-775 are disordered; that stretch reads FHASLGSSPGLSASAAGFSKKPKSGRPKTGKKVSTPTSAHSPLSGSGSPLYPQSRGLVPK. The span at 718 to 734 shows a compositional bias: low complexity; it reads ASLGSSPGLSASAAGFS. Positions 735–746 are enriched in basic residues; it reads KKPKSGRPKTGK. The span at 756 to 765 shows a compositional bias: low complexity; the sequence is SPLSGSGSPL.

This sequence belongs to the TRAFAC class myosin-kinesin ATPase superfamily. Kinesin family. In terms of assembly, heterodimer of KIF3A and KIF3B. KIF3A/KIF3B heterodimer interacts with KIFAP3 forming a heterotrimeric (KIF3A/KIF3B/KIFAP3) complex.

Its subcellular location is the cytoplasm. The protein resides in the cytoskeleton. It localises to the cell projection. It is found in the cilium. The protein localises to the dendritic spine. Microtubule-based molecular motor that transport intracellular cargos, such as vesicles, organelles and protein complexes. Uses ATP hydrolysis to generate force to bind and move along the microtubule. Plays a role in cilia formation. Required for photoreceptor development. In Danio rerio (Zebrafish), this protein is Kinesin-like protein KIF3B.